Consider the following 373-residue polypeptide: RNA 3'-terminal phosphate cyclase-like protein (373 aa).

Belongs to the RNA 3'-terminal cyclase family. Type 2 subfamily. Part of the small subunit (SSU) processome, composed of more than 70 proteins and the RNA chaperone small nucleolar RNA (snoRNA) U3. Interacts with BMS1.

The protein localises to the nucleus. The protein resides in the nucleolus. Functionally, as part of the small subunit (SSU) processome, it plays a role in 40S-ribosomal-subunit biogenesis in the early pre-rRNA processing steps at sites A0, A1 and A2 that are required for proper maturation of the 18S RNA. Activates BMS1 by promoting GDP/GTP exchange. Does not have cyclase activity. This is RNA 3'-terminal phosphate cyclase-like protein (RCL1) from Bos taurus (Bovine).